The sequence spans 581 residues: Transcription activator GAGA (581 aa).

A BTB domain is found at 34-99; sequence VDCTLAAGGR…VYRGEVSVDH (66 aa). Residues 201–397 are interaction with E(bx); the sequence is VIQAFLPARK…SSGSGSGALS (197 aa). Residue T237 is modified to Phosphothreonine. Disordered regions lie at residues 298–343 and 364–404; these read ITPA…EQPA and LRHF…SVPQ. The C2H2-type; degenerate zinc finger occupies 343 to 366; that stretch reads ATCPICYAVIRQSRNLRRHLELRH. Residues 381–401 are compositionally biased toward low complexity; it reads GKKSSSGSSGSGSGALSSSGS.

As to quaternary structure, interacts with Bin1, lolal, corto, ttk and ph-p. Interacts with FACT subunits Ssrp and dre4/SPT16. Interacts with E(bx). Upon ecdysone stimulation, interacts with Nup98. Post-translationally, the N-terminus is blocked. In terms of tissue distribution, expressed in the central nervous system throughout development.

The protein localises to the nucleus. It is found in the chromosome. Its function is as follows. Transcriptional activator that functions by regulating chromatin structure. Overcomes the repressive effects of chromatin by promoting the open chromatin conformation in promoter gene regions, thereby allowing access to other transcription factors. Binds to DNA Polycomb response elements (PREs) at the bithorax complex and to the proximal region of the engrailed promoter, and positively regulates transcription of many genes including homeotic ones. Involved in zygotic genome activation (ZGA), a critical event in early embryonic development during which the developmental control passes from maternally provided mRNAs to the expression of the zygotic genome after fertilization. Binds to the DNA sequence (GA)n, with optimal binding to the pentamer 5'-GAGAG-3'. Binds DNA as an oligomer. May also act as a transcriptional repressor, maintaining the repressed state of genes including lolal, and down-regulating its own transcription. Required for dosage compensation in males and may be involved in oogenesis. Also has a role in nuclear division. The polypeptide is Transcription activator GAGA (Trl) (Drosophila melanogaster (Fruit fly)).